Consider the following 35-residue polypeptide: U1-theraphotoxin-Hs1f (35 aa).

3 disulfides stabilise this stretch: C3–C16, C7–C27, and C21–C32.

It belongs to the neurotoxin 12 (Hwtx-2) family. 02 (Hwtx-2) subfamily. In terms of tissue distribution, expressed by the venom gland.

It is found in the secreted. In terms of biological role, blocks neuromuscular transmission. Acts cooperatively to potentiate the activity of huwentoxin-I. Paralyzes locusts and kills mice following intracerebroventricular injection. This is U1-theraphotoxin-Hs1f from Cyriopagopus schmidti (Chinese bird spider).